The sequence spans 302 residues: D-alanine--D-alanine ligase B (302 aa).

The ATP-grasp domain occupies 99–294; the sequence is KKVLKAENIR…YSKFIDLIIE (196 aa). 126 to 181 is a binding site for ATP; that stretch reads IEEIGYPVFVKPNNGGSSVATFKVYKKEDIKNSVMEGLKYDEEVIIESFIKGREIT. The Mg(2+) site is built by Asp-248, Glu-261, and Asn-263.

Belongs to the D-alanine--D-alanine ligase family. The cofactor is Mg(2+). Mn(2+) serves as cofactor.

The protein localises to the cytoplasm. It catalyses the reaction 2 D-alanine + ATP = D-alanyl-D-alanine + ADP + phosphate + H(+). The protein operates within cell wall biogenesis; peptidoglycan biosynthesis. Its function is as follows. Cell wall formation. The chain is D-alanine--D-alanine ligase B from Clostridium perfringens (strain 13 / Type A).